A 340-amino-acid polypeptide reads, in one-letter code: Glycerol-3-phosphate dehydrogenase [NAD(P)+] (340 aa).

NADPH contacts are provided by Ser-14, Tyr-15, His-35, and Lys-109. Sn-glycerol 3-phosphate-binding residues include Lys-109, Gly-138, and Thr-140. Residue Ala-142 participates in NADPH binding. Sn-glycerol 3-phosphate contacts are provided by Lys-194, Asp-247, Ser-257, Arg-258, and Asn-259. Lys-194 functions as the Proton acceptor in the catalytic mechanism. Arg-258 contacts NADPH. NADPH-binding residues include Val-282 and Glu-284.

Belongs to the NAD-dependent glycerol-3-phosphate dehydrogenase family.

It localises to the cytoplasm. The enzyme catalyses sn-glycerol 3-phosphate + NAD(+) = dihydroxyacetone phosphate + NADH + H(+). The catalysed reaction is sn-glycerol 3-phosphate + NADP(+) = dihydroxyacetone phosphate + NADPH + H(+). Its pathway is membrane lipid metabolism; glycerophospholipid metabolism. Catalyzes the reduction of the glycolytic intermediate dihydroxyacetone phosphate (DHAP) to sn-glycerol 3-phosphate (G3P), the key precursor for phospholipid synthesis. The chain is Glycerol-3-phosphate dehydrogenase [NAD(P)+] from Photorhabdus laumondii subsp. laumondii (strain DSM 15139 / CIP 105565 / TT01) (Photorhabdus luminescens subsp. laumondii).